A 279-amino-acid polypeptide reads, in one-letter code: Undecaprenyl-diphosphatase (279 aa).

Transmembrane regions (helical) follow at residues 45-65 (FVEM…IVIY), 85-105 (WQLW…ALPF), 113-133 (FNFM…FIWV), 188-208 (SVAA…YSGL), 226-246 (LILL…IRFL), and 255-275 (FTIF…YWLV).

The protein belongs to the UppP family.

The protein resides in the cell membrane. It carries out the reaction di-trans,octa-cis-undecaprenyl diphosphate + H2O = di-trans,octa-cis-undecaprenyl phosphate + phosphate + H(+). Its function is as follows. Catalyzes the dephosphorylation of undecaprenyl diphosphate (UPP). Confers resistance to bacitracin. In Streptococcus agalactiae serotype Ia (strain ATCC 27591 / A909 / CDC SS700), this protein is Undecaprenyl-diphosphatase.